Consider the following 377-residue polypeptide: tRNA-specific 2-thiouridylase MnmA (377 aa).

ATP-binding positions include 9-16 (AMSGGVDS) and L35. The Nucleophile role is filled by C105. A disulfide bridge connects residues C105 and C201. Position 129 (G129) interacts with ATP. The interval 151–153 (KNQ) is interaction with tRNA. Catalysis depends on C201, which acts as the Cysteine persulfide intermediate. The tract at residues 307 to 308 (RY) is interaction with tRNA.

The protein belongs to the MnmA/TRMU family.

The protein resides in the cytoplasm. The catalysed reaction is S-sulfanyl-L-cysteinyl-[protein] + uridine(34) in tRNA + AH2 + ATP = 2-thiouridine(34) in tRNA + L-cysteinyl-[protein] + A + AMP + diphosphate + H(+). Functionally, catalyzes the 2-thiolation of uridine at the wobble position (U34) of tRNA, leading to the formation of s(2)U34. The sequence is that of tRNA-specific 2-thiouridylase MnmA from Leptospira borgpetersenii serovar Hardjo-bovis (strain JB197).